A 621-amino-acid chain; its full sequence is MDKNTLVGFALIGAVVIGFSIYNRPSQEEMARAKHYQDSIQAIAQKEAERLAQAATAQSQNATLHLDSTSMFYGANQGTEQLTTLENNVVKLTFTNKGGRVCAAILKDYNGQDGKPLMLFDEKDSGMNFAFEGKNENILTEDMYFQPTNVTDSTVTMRLAANNGGYIDFDYKLLPDAYMVNFTIRANGMQNFFPPALNTVNINWRQRARQLEKGFSFEQRYTSLTYKPVEKSSDYLNEMKEAKEDVTDRLDWIAFKNQFFSSVLIADQDFDKASLTSTPQQEGSGYMKNYTADMTTFFDPTGKQPTDMQFYFGPNHFKTLLNSNDLSLSQKDLELEDLVYLGWPIIRWVNRWFTINLFDWLSGWGLSMGVVLLLMTIIVKVLVYPATYKSYMSSAKMRVLKPYINEINAKYPKKEDALKKQQETMALYSKYGVSPMGGCLPMLIQMPVFMALFFFVPNAIELRQQSFLWAPDLSTYDDIINWGTNIPLLGNHLSLFCLLFSITNILNTMYTMKQQDMGQQQMPGMKLMMYIMPVMFIFIFNGYSSGLNYYYFISGLIGILTMVILRKTTDEKKLLAMLEARKEKKSQKNGGKPGGGLMAKLEALQKEQERLQQERMNKGKK.

The next 6 membrane-spanning stretches (helical) occupy residues 1–21, 363–383, 436–456, 486–506, 527–547, and 549–569; these read MDKN…GFSI, GWGL…KVLV, MGGC…FFFV, IPLL…TNIL, LMMY…SSGL, and YYYF…RKTT.

It belongs to the OXA1/ALB3/YidC family. Type 1 subfamily. Interacts with the Sec translocase complex via SecD. Specifically interacts with transmembrane segments of nascent integral membrane proteins during membrane integration.

It is found in the cell inner membrane. Functionally, required for the insertion and/or proper folding and/or complex formation of integral membrane proteins into the membrane. Involved in integration of membrane proteins that insert both dependently and independently of the Sec translocase complex, as well as at least some lipoproteins. Aids folding of multispanning membrane proteins. This chain is Membrane protein insertase YidC, found in Phocaeicola vulgatus (strain ATCC 8482 / DSM 1447 / JCM 5826 / CCUG 4940 / NBRC 14291 / NCTC 11154) (Bacteroides vulgatus).